Consider the following 1371-residue polypeptide: Serine protease pic autotransporter (1371 aa).

A signal peptide spans 1–55 (MNKVYSLKYCPVTGGLIVVSELASRVIKKTCRRLTHILLAGIPAVYLYYPQISQA). Positions 56–301 (GIVRSDIAYQ…NVIPTDYLNQ (246 aa)) constitute a Peptidase S6 domain. Catalysis depends on charge relay system residues H127, D155, and S258. The region spanning 1105–1371 (DTNGDAGAWA…AVNANFRYMF (267 aa)) is the Autotransporter domain.

Cleaved to release the mature protein from the outer membrane.

It localises to the periplasm. Its subcellular location is the secreted. It is found in the cell surface. The protein resides in the cell outer membrane. Involved in virulence of uropathogenic E.coli although it is not known how it contributes to it. Has no mucinase activity. This is Serine protease pic autotransporter (pic) from Escherichia coli O6:H1 (strain CFT073 / ATCC 700928 / UPEC).